Here is a 225-residue protein sequence, read N- to C-terminus: Uridylate kinase (225 aa).

9–10 (GS) is a binding site for ATP. Residue G44 coordinates UMP. 2 residues coordinate ATP: G45 and R49. Residues D66 and 114–120 (THPGHTT) contribute to the UMP site. The ATP site is built by T140, N141, Y146, and D149.

The protein belongs to the UMP kinase family. Homohexamer.

Its subcellular location is the cytoplasm. It carries out the reaction UMP + ATP = UDP + ADP. It participates in pyrimidine metabolism; CTP biosynthesis via de novo pathway; UDP from UMP (UMPK route): step 1/1. Inhibited by UTP. Its function is as follows. Catalyzes the reversible phosphorylation of UMP to UDP. The polypeptide is Uridylate kinase (Pyrococcus abyssi (strain GE5 / Orsay)).